We begin with the raw amino-acid sequence, 79 residues long: Acyl carrier protein (79 aa).

The region spanning 2–77 (STIEERVKKI…QAIDYVKAHV (76 aa)) is the Carrier domain. Ser37 is subject to O-(pantetheine 4'-phosphoryl)serine.

This sequence belongs to the acyl carrier protein (ACP) family. Post-translationally, 4'-phosphopantetheine is transferred from CoA to a specific serine of apo-ACP by AcpS. This modification is essential for activity because fatty acids are bound in thioester linkage to the sulfhydryl of the prosthetic group.

The protein localises to the cytoplasm. Its pathway is lipid metabolism; fatty acid biosynthesis. Carrier of the growing fatty acid chain in fatty acid biosynthesis. The protein is Acyl carrier protein of Xanthomonas axonopodis pv. citri (strain 306).